The following is a 39-amino-acid chain: Potassium channel toxin alpha-KTx 31.1 (39 aa).

3 disulfide bridges follow: C7–C30, C13–C35, and C17–C37.

Belongs to the short scorpion toxin superfamily. Potassium channel inhibitor family. Alpha-KTx 31 subfamily. Expressed by the venom gland.

It localises to the secreted. In terms of biological role, voltage-gated potassium channel inhibitor. 1 uM of the native toxin inhibits rat Kv1.2/KCNA2 (100% inhibition), and drosophila Shaker IR/Sh (100%), human Kv1.3/KCNA3 (83%), rat Kv1.1/KCNA1 (32%) and rat Kv1.6/KCNA6 (21%). In Buthus occitanus tunetanus (Common European scorpion), this protein is Potassium channel toxin alpha-KTx 31.1.